We begin with the raw amino-acid sequence, 274 residues long: Undecaprenyl-diphosphatase 1 (274 aa).

Transmembrane regions (helical) follow at residues 47–67, 85–105, 113–133, 150–170, 196–216, 225–245, and 253–273; these read QVFL…LYFN, VSMW…GIPF, FYNY…FIMI, ITYT…VFPG, FFLA…KFGL, ILFI…KFLM, and FKAF…YFLI.

This sequence belongs to the UppP family.

The protein localises to the cell membrane. It catalyses the reaction di-trans,octa-cis-undecaprenyl diphosphate + H2O = di-trans,octa-cis-undecaprenyl phosphate + phosphate + H(+). Its function is as follows. Catalyzes the dephosphorylation of undecaprenyl diphosphate (UPP). Confers resistance to bacitracin. The sequence is that of Undecaprenyl-diphosphatase 1 from Clostridium acetobutylicum (strain ATCC 824 / DSM 792 / JCM 1419 / IAM 19013 / LMG 5710 / NBRC 13948 / NRRL B-527 / VKM B-1787 / 2291 / W).